The chain runs to 146 residues: Transcriptional regulator MraZ (146 aa).

SpoVT-AbrB domains follow at residues 5 to 47 (EYYH…TITD) and 76 to 119 (SVQV…AKER).

The protein belongs to the MraZ family. As to quaternary structure, forms oligomers.

The protein localises to the cytoplasm. Its subcellular location is the nucleoid. In Dictyoglomus turgidum (strain DSM 6724 / Z-1310), this protein is Transcriptional regulator MraZ.